The following is a 58-amino-acid chain: Protein translocase subunit SecE (58 aa).

The helical transmembrane segment at 36-56 threads the bilayer; that stretch reads ILLIGFIGFLMFAIMSLLPGV.

It belongs to the SecE/SEC61-gamma family. In terms of assembly, component of the Sec protein translocase complex. Heterotrimer consisting of SecY (alpha), SecG (beta) and SecE (gamma) subunits. The heterotrimers can form oligomers, although 1 heterotrimer is thought to be able to translocate proteins. Interacts with the ribosome. May interact with SecDF, and other proteins may be involved.

The protein resides in the cell membrane. Essential subunit of the Sec protein translocation channel SecYEG. Clamps together the 2 halves of SecY. May contact the channel plug during translocation. The polypeptide is Protein translocase subunit SecE (Halorubrum lacusprofundi (strain ATCC 49239 / DSM 5036 / JCM 8891 / ACAM 34)).